Here is a 357-residue protein sequence, read N- to C-terminus: O-methyltransferase pgmB (357 aa).

Position 206 (D206) interacts with S-adenosyl-L-methionine. H256 serves as the catalytic Proton acceptor.

Belongs to the class I-like SAM-binding methyltransferase superfamily. Cation-independent O-methyltransferase family.

It participates in pigment biosynthesis. Its pathway is secondary metabolite biosynthesis. Its function is as follows. O-methyltransferase; part of the gene cluster that mediates the biosynthesis of pleosporalin A, ascomycone A, as well as a third cryptic naphthoquinone derived pigment, all responsible for the coloration of conidia. Specifically methylates position C-6 of the pgmA product 3-acetonyl-1,6,8-trihydroxy-2-naphthaldehyde to yield fusarubinaldehyde. The pathway begins with the biosynthesis of the cyclized heptaketide 3-acetonyl-1,6,8-trihydroxy-2-naphthaldehyde by the NR-PKS pgmA. The C-6 hydroxyl group is further methylated by the O-methyltransferase pgmB to yield fusarubinaldehyde which is in turn oxidized by the cytochrome P450 monooxygenase pgmC at C-9. The C-1 hydroxyl group is then methylated spontaneously. Although pgmE, pgmD and pgmH are essential for the production of pleosporalin A, it is not the case for the 2 other final products and it remains difficult to assign a specific function to each enzyme. PgmF and pgmG seem not to be involved in pigment biosynthesis although they were regulated by the cluster-specific transcription factor pgmR. In Aspergillus terreus (strain NIH 2624 / FGSC A1156), this protein is O-methyltransferase pgmB.